The following is a 961-amino-acid chain: MDEQALMGLNPNADACYRQRALAYFEQLKASLDGWEVCAEALAKGVYSDDHVKFFCFQVLEHQIKFRHGSLSAAQQQLIRETLMKWLQTQLMNVHPEKPFIRNKAAQVFALTFVMEYLTLWPKFFFDVLALVGLNPNGVDIYLRTLMAIDAEVVDRDILHSPEETRRNTLIKDGMREQCIPALVESWFQILQTYQHTHSELTCQCLEVVGAFVSWIDLNLIANDRFVNLLLSHMSMEELREAACDCLFEIVNKGMDPVDKTKLVESLCQVLQSAGFFNVEQEEDVDFLAKFSRLVNGMGQSLVLSWTKLSKTADEKISAETLRAVESKVPLMLQLLIHEDDDISANIVCFCYDYLHVLKQLPALNEQQKSNVEAIMLAVMSKLKYDDEYNFENEGEDEAMFVEYRKQLKMLLDRLAQVSPELLLEAVHRVFNATMQSWQTLQFMEVEVSIRLLYMLGEALPASHGAHFSGDSAKTSTLQAMMRTLVSCGVSEYQHSSVTLEFFETVVRYDKFFLVEPQHIPAVLMAFLDHRGLRHSSPKVRSRVAYLFSRFIKTLHKHMNAFIEDILSRIQDLLELAPPENGFPALLSSDDQLFMFETAGVLIVNGESPAERKQGLMRGLLSPLMEAFRMLLEKLPLEPDEERQTALADCLSHAVGFASRTSKAFSNKQTVKQCGCSEVYLDCLQTFLPALSCPVQRGALRSAVRSFLHRMIICLEEEVLPFIPAASQHMLKDCEARDLQEFIPLISQITAKFKNQVSPFLQEIFMPLVMSIFEVLSRPAEENDQTAALEKQMLRRSYFSFIQTIASSSSSQVMASQGAENIERVLFTIIQGAVDFPDPVAQKTCFIILSRLVELWGGKDGLVGFPDFIYKHIIPACFMAPLKTTFDLSDAQTVLTLSECSLTLHMIHLKRGPECLQFLQEYLPSLHVSPEITQELCQVLQQPDVKVLKNYMKVFFQQAKL.

It belongs to the exportin family.

The protein localises to the cytoplasm. It is found in the nucleus. Its function is as follows. Mediates the nuclear export of aminoacylated tRNAs. This chain is Exportin-T (xpot), found in Danio rerio (Zebrafish).